We begin with the raw amino-acid sequence, 502 residues long: Hippocampus abundant transcript-like protein 1 (502 aa).

The span at 1 to 12 shows a compositional bias: basic and acidic residues; that stretch reads MNAEPPEEKAAS. A disordered region spans residues 1 to 27; the sequence is MNAEPPEEKAASEAEAGAMPEKRAGSR. Over 1-46 the chain is Extracellular; the sequence is MNAEPPEEKAASEAEAGAMPEKRAGSRAAGGNSLQGFGRPSVYHAA. The chain crosses the membrane as a helical span at residues 47-67; the sequence is IVIFLEFFAWGLLTTSMLTVL. Residues 68–79 are Cytoplasmic-facing; the sequence is HETFPQHTFLMN. The helical transmembrane segment at 80–100 threads the bilayer; sequence GLIQGVKGLLSFLSAPLIGAL. At 101–108 the chain is on the extracellular side; it reads SDVWGRKP. Residues 109–129 traverse the membrane as a helical segment; that stretch reads FLLGTVFFTCFPIPLMRISPW. Residues 130-131 are Cytoplasmic-facing; that stretch reads WY. The chain crosses the membrane as a helical span at residues 132–152; sequence FAMISISGVFSVTFSVIFAYV. Residues 153–165 are Extracellular-facing; the sequence is ADVTQEHERSTAY. The chain crosses the membrane as a helical span at residues 166–186; sequence GWVSATFAASLVSSPAIGAYL. Residues 187 to 193 are Cytoplasmic-facing; the sequence is SASYGDS. A helical transmembrane segment spans residues 194 to 214; it reads LVVLVATVVALLDICFILLAV. Residues 215–248 lie on the Extracellular side of the membrane; it reads PESLPEKMRPLSWGARISWKQADPFASLKKVGKD. Residues 249 to 269 form a helical membrane-spanning segment; it reads STILLICITVFLSYLPEAGQY. Topologically, residues 270 to 278 are cytoplasmic; sequence SSFFLYLRQ. The helical transmembrane segment at 279 to 299 threads the bilayer; that stretch reads VIGFGSIKIAAFIAMVGILSI. The Extracellular portion of the chain corresponds to 300-316; sequence VAQTVFLTSLMRSLGNK. Residues 317–337 traverse the membrane as a helical segment; sequence NTVLLGLGFQMFQLAWYGFGS. A topological domain (cytoplasmic) is located at residue Q338. The helical transmembrane segment at 339 to 359 threads the bilayer; it reads AWMMWAAGIVAAVSSITFPAV. The Extracellular segment spans residues 360–384; that stretch reads STLVSQNADSNQQGVAQGIITGIRG. Residues 385-405 traverse the membrane as a helical segment; that stretch reads LCNGLGPALYGFIFYMFHVEL. The Cytoplasmic portion of the chain corresponds to 406–425; that stretch reads TELEPELISNNAALQGAVIP. A helical transmembrane segment spans residues 426 to 446; that stretch reads GPPFLFGACIVFMSFLVAVFI. The Extracellular segment spans residues 447 to 502; it reads PEYSKGGIQKHSNSISGSLANTPERGSDEDIEPLLQDSSIWELSSLEEPGHQCTEL.

This sequence belongs to the major facilitator superfamily.

It is found in the membrane. The protein is Hippocampus abundant transcript-like protein 1 of Bos taurus (Bovine).